We begin with the raw amino-acid sequence, 213 residues long: General transcription factor 3C polypeptide 6 (213 aa).

Basic and acidic residues predominate over residues 1 to 11; that stretch reads MAAAADERSPE. 2 disordered regions span residues 1–20 and 191–213; these read MAAA…EEEE and SGPL…QMLP. Residue A2 is modified to N-acetylalanine. A Phosphoserine modification is found at S9.

The protein belongs to the TFIIIC subunit 6 family. As to quaternary structure, part of the TFIIIC subcomplex TFIIIC2, consisting of six subunits, GTF3C1, GTF3C2, GTF3C3, GTF3C4, GTF3C5 and GTF3C6. Interacts with GTF3C4 and GTF3C5.

It localises to the nucleus. Involved in RNA polymerase III-mediated transcription. Integral, tightly associated component of the DNA-binding TFIIIC2 subcomplex that directly binds tRNA and virus-associated RNA promoters. The sequence is that of General transcription factor 3C polypeptide 6 (GTF3C6) from Homo sapiens (Human).